Consider the following 999-residue polypeptide: Signal peptide, CUB and EGF-like domain-containing protein 2 (999 aa).

The N-terminal stretch at 1-31 is a signal peptide; the sequence is MGVAGRNRPGAAWAVLLLLLLLPPLLLLAGA. Positions 45–85 constitute an EGF-like 1; calcium-binding domain; sequence DVDECAQGLDDCHADALCQNTPTSYKCSCKPGYQGEGRQCE. 6 disulfides stabilise this stretch: Cys-49–Cys-62, Cys-56–Cys-71, Cys-73–Cys-84, Cys-90–Cys-102, Cys-98–Cys-111, and Cys-113–Cys-126. The EGF-like 2; calcium-binding domain occupies 86–127; it reads DIDECGNELNGGCVHDCLNIPGNYRCTCFDGFMLAHDGHNCL. The region spanning 128-168 is the EGF-like 3; calcium-binding domain; the sequence is DVDECLENNGGCQHTCVNVMGSYECCCKEGFFLSDNQHTCI. EGF-like domains follow at residues 177 to 213, 217 to 252, and 286 to 321; these read CMNKDHGCSHICKEAPRGSVACECRPGFELAKNQRDC, CNHGNGGCQHSCDDTADGPECSCHPQYKMHTDGRSC, and CAVNNGGCDRTCKDTSTGVHCSCPVGFTLQLDGKTC. The 41-residue stretch at 323–363 folds into the EGF-like 7; calcium-binding domain; sequence DIDECQTRNGGCDHFCKNIVGSFDCGCKKGFKLLTDEKSCQ. One can recognise an EGF-like 8; calcium-binding domain in the interval 364 to 402; the sequence is DVDECSLDRTCDHSCINHPGTFACACNRGYTLYGFTHCG. 6 cysteine pairs are disulfide-bonded: Cys-368/Cys-378, Cys-374/Cys-387, Cys-389/Cys-401, Cys-407/Cys-418, Cys-414/Cys-427, and Cys-429/Cys-442. An EGF-like 9; calcium-binding domain is found at 403–443; it reads DTNECSINNGGCQQVCVNTVGSYECQCHPGYKLHWNKKDCV. N-linked (GlcNAc...) asparagine glycosylation occurs at Asn-659. The cysteines at positions 809 and 835 are disulfide-linked. Positions 809–921 constitute a CUB domain; the sequence is CGGELGDFTG…RGFQVPYVTY (113 aa). Residues 847–856 form an interaction with the cholesterol-anchor of SHH region; sequence ILIVVPEIFL. The cysteines at positions 862 and 883 are disulfide-linked.

As to quaternary structure, forms homooligomers. Forms heterooligomers with SCUBE1. Forms heterooligomers with SCUBE3. Interacts with SHH via the cholesterol anchor of the dually lipid-modified SHH (ShhNp). Interacts with PTCH1. Interacts with VEGFR2. In terms of processing, N-glycosylated. As to expression, expressed in a broad spectrum of adult tissues.

It is found in the secreted. It localises to the cell surface. Its function is as follows. Lipid-binding protein required for SHH long-range signaling by binding to the dually lipid-modified SHH (ShhNp) and by promoting ShhNp mobilization, solubilization and release from the cell membrane. Acts by enhancing the proteolytic processing (shedding) of the lipid-modified N- and C- terminal of ShhNp at the cell surface. Synergizes with DISP1 to increase SHH secretion. Probable cell surface coreceptor for VEGFR2 involved in VEGFR2-mediated angiogenesis. The protein is Signal peptide, CUB and EGF-like domain-containing protein 2 of Homo sapiens (Human).